Here is a 156-residue protein sequence, read N- to C-terminus: Small ribosomal subunit protein uS7 (156 aa).

It belongs to the universal ribosomal protein uS7 family. As to quaternary structure, part of the 30S ribosomal subunit. Contacts proteins S9 and S11.

One of the primary rRNA binding proteins, it binds directly to 16S rRNA where it nucleates assembly of the head domain of the 30S subunit. Is located at the subunit interface close to the decoding center, probably blocks exit of the E-site tRNA. The sequence is that of Small ribosomal subunit protein uS7 from Bacillus licheniformis (strain ATCC 14580 / DSM 13 / JCM 2505 / CCUG 7422 / NBRC 12200 / NCIMB 9375 / NCTC 10341 / NRRL NRS-1264 / Gibson 46).